The primary structure comprises 276 residues: Large ribosomal subunit protein uL2c (276 aa).

Disordered stretches follow at residues methionine 1–threonine 51 and valine 224–lysine 276. Composition is skewed to polar residues over residues arginine 7–isoleucine 18 and serine 27–glutamine 37.

This sequence belongs to the universal ribosomal protein uL2 family. As to quaternary structure, part of the 50S ribosomal subunit.

The protein resides in the plastid. It is found in the chloroplast. This Cycas taitungensis (Prince sago) protein is Large ribosomal subunit protein uL2c (rpl2).